Reading from the N-terminus, the 240-residue chain is tRNA (guanine-N(7)-)-methyltransferase (240 aa).

Residues glutamate 71, glutamate 96, aspartate 123, and aspartate 146 each contribute to the S-adenosyl-L-methionine site. The active site involves aspartate 146. Residues lysine 150, aspartate 182, and 219-222 each bind substrate; that span reads TKFE.

The protein belongs to the class I-like SAM-binding methyltransferase superfamily. TrmB family.

The enzyme catalyses guanosine(46) in tRNA + S-adenosyl-L-methionine = N(7)-methylguanosine(46) in tRNA + S-adenosyl-L-homocysteine. The protein operates within tRNA modification; N(7)-methylguanine-tRNA biosynthesis. Functionally, catalyzes the formation of N(7)-methylguanine at position 46 (m7G46) in tRNA. The protein is tRNA (guanine-N(7)-)-methyltransferase of Hydrogenovibrio crunogenus (strain DSM 25203 / XCL-2) (Thiomicrospira crunogena).